The primary structure comprises 2839 residues: Bifunctional DNA-directed RNA polymerase subunit beta-beta' (2839 aa).

Positions 1–1433 (MVDSSYMCAS…CLNVALKQNN (1433 aa)) are DNA-directed RNA polymerase subunit beta. A DNA-directed RNA polymerase subunit beta' region spans residues 1436-2839 (IEDISHTNIA…KESVAESRYN (1404 aa)). 4 residues coordinate Zn(2+): C1501, C1503, C1516, and C1519. Mg(2+) is bound by residues D1893, D1895, and D1897. The Zn(2+) site is built by C2238, C2312, C2319, and C2322.

It in the N-terminal section; belongs to the RNA polymerase beta chain family. In the C-terminal section; belongs to the RNA polymerase beta' chain family. The RNAP catalytic core consists of 2 alpha, 1 beta/beta' and 1 omega subunit. When a sigma factor is associated with the core the holoenzyme is formed, which can initiate transcription. Requires Mg(2+) as cofactor. Zn(2+) serves as cofactor.

The enzyme catalyses RNA(n) + a ribonucleoside 5'-triphosphate = RNA(n+1) + diphosphate. DNA-dependent RNA polymerase catalyzes the transcription of DNA into RNA using the four ribonucleoside triphosphates as substrates. This Wolbachia sp. subsp. Brugia malayi (strain TRS) protein is Bifunctional DNA-directed RNA polymerase subunit beta-beta' (rpoBC).